The primary structure comprises 319 residues: Free fatty acid receptor 3 (319 aa).

The Extracellular portion of the chain corresponds to 1 to 15 (MDTSFFPGNHWLFFS). The chain crosses the membrane as a helical span at residues 16-36 (VDLLVFLVGLPLNVMALVVFV). The Cytoplasmic portion of the chain corresponds to 37–43 (NKLRRRP). Residues 44-64 (VAVDLLLLNLTISDLLLLLFL) traverse the membrane as a helical segment. The Extracellular segment spans residues 65–98 (PFRIVEAACGMKWILPFIFCPLSGFLFFTTIYLT). A disulfide bridge links Cys84 with Cys165. The helical transmembrane segment at 99–119 (SLFLMTVSIERFLSVAYPLWY) threads the bilayer. The Cytoplasmic segment spans residues 120 to 127 (KTRPRLAQ). The helical transmembrane segment at 128–148 (AGLVSGICWFLASAHCSVIYV) threads the bilayer. The Extracellular segment spans residues 149-183 (TEYWGNATYSQGTNGTCYLEFREDQLAILLPVRLE). Residues 184 to 206 (MAVVLFMVPLCITSYCYSRLVWI) form a helical membrane-spanning segment. Residues 207–218 (LSQGASRRRRKR) lie on the Cytoplasmic side of the membrane. The chain crosses the membrane as a helical span at residues 219–239 (VMGLLVATLLIFFVCFGPYNM). The Extracellular segment spans residues 240 to 254 (SHVVGYVRGESPTWR). Residues 255 to 275 (SYVLLLSTLNSCIDPLVFYFS) traverse the membrane as a helical segment. The Cytoplasmic portion of the chain corresponds to 276–319 (SSKFQADFHQLLSRLIRACVPWTQEVSLELKVKNGEEPSKECPS).

Belongs to the G-protein coupled receptor 1 family. Expressed in the sympathetic nervous system.

The protein localises to the cell membrane. Functionally, g protein-coupled receptor that is activated by a major product of dietary fiber digestion, the short chain fatty acids (SCFAs), and that plays a role in the regulation of whole-body energy homeostasis and in intestinal immunity. In omnivorous mammals, the short chain fatty acids acetate, propionate and butyrate are produced primarily by the gut microbiome that metabolizes dietary fibers. SCFAs serve as a source of energy but also act as signaling molecules. That G protein-coupled receptor is probably coupled to the pertussis toxin-sensitive, G(i/o)-alpha family of G proteins. Its activation results in the formation of inositol 1,4,5-trisphosphate, the mobilization of intracellular calcium, the phosphorylation of the MAPK3/ERK1 and MAPK1/ERK2 kinases and the inhibition of intracellular cAMP accumulation. Activated by SCFAs and by beta-hydroxybutyrate, a ketone body produced by the liver upon starvation, it inhibits N-type calcium channels and modulates the activity of sympathetic neurons through a signaling cascade involving the beta and gamma subunits of its coupled G protein, phospholipase C and MAP kinases. Thereby, it may regulate energy expenditure through the control of the sympathetic nervous system that controls for instance heart rate. Upon activation by SCFAs accumulating in the intestine, it may also signal to the brain via neural circuits which in turn would regulate intestinal gluconeogenesis. May also control the production of hormones involved in whole-body energy homeostasis. May for instance, regulate blood pressure through renin secretion. May also regulate secretion of the PYY peptide by enteroendocrine cells and control gut motility, intestinal transit rate, and the harvesting of energy from SCFAs produced by gut microbiota. May also indirectly regulate the production of LEP/Leptin, a hormone acting on the CNS to inhibit food intake, in response to the presence of short-chain fatty acids in the intestine. Finally, may also play a role in glucose homeostasis. Besides its role in energy homeostasis, may play a role in intestinal immunity. May mediate the activation of the inflammatory and immune response by SCFAs in the gut, regulating the rapid production of chemokines and cytokines by intestinal epithelial cells. The sequence is that of Free fatty acid receptor 3 (Ffar3) from Rattus norvegicus (Rat).